Here is a 186-residue protein sequence, read N- to C-terminus: UPF0398 protein LBUL_0921 (186 aa).

Belongs to the UPF0398 family.

In Lactobacillus delbrueckii subsp. bulgaricus (strain ATCC BAA-365 / Lb-18), this protein is UPF0398 protein LBUL_0921.